The sequence spans 41 residues: uncharacterized protein (41 aa).

This is an uncharacterized protein from Bacillus subtilis (strain 168).